The sequence spans 229 residues: Potassium/proton antiporter CemA (229 aa).

The next 4 helical transmembrane spans lie at 7-27 (FTPLLYLVSIVFLPWWLSLSF), 114-134 (IICFVILSGFSILGNEELVIL), 154-174 (ILLLTDLCIGFHSPHGWELMV), and 189-209 (IISGLVSTFPVILDTIFKYWI).

This sequence belongs to the CemA family.

The protein resides in the plastid. It is found in the chloroplast inner membrane. The catalysed reaction is K(+)(in) + H(+)(out) = K(+)(out) + H(+)(in). Its function is as follows. Contributes to K(+)/H(+) antiport activity by supporting proton efflux to control proton extrusion and homeostasis in chloroplasts in a light-dependent manner to modulate photosynthesis. Prevents excessive induction of non-photochemical quenching (NPQ) under continuous-light conditions. Indirectly promotes efficient inorganic carbon uptake into chloroplasts. This is Potassium/proton antiporter CemA from Coffea arabica (Arabian coffee).